We begin with the raw amino-acid sequence, 256 residues long: MAARLLFRRSSQILRSIQRNPQISSSFESPPCPIFHSLTTASPDPSRLSSLTFLRSLSIARRGPTRPKKIDIGAKARQMQNRRLWTYALTFSCIAGFVVIVLNQFQDQLVFYLTPSDAMEKFAENPTKNKFRLGGLVLEGSVAQPAASQEMEFVITDLITDILVRYKGSLPDLFREGHSVVVEGFIKPYTDEVRKEVSTKPISKKARNLDCFFSATEVLAKHDEKYMPQEVAAAIEKNKKIIEAAATEQAAEVAAS.

The N-terminal 57 residues, 1–57 (MAARLLFRRSSQILRSIQRNPQISSSFESPPCPIFHSLTTASPDPSRLSSLTFLRSL), are a transit peptide targeting the mitochondrion. The helical transmembrane segment at 84 to 106 (LWTYALTFSCIAGFVVIVLNQFQ) threads the bilayer. 2 residues coordinate heme: His222 and Tyr226.

The protein belongs to the CcmE/CycJ family.

It is found in the mitochondrion inner membrane. Its subcellular location is the mitochondrion intermembrane space. Functionally, heme-binding chaperone that may be involved in cytochrome c maturation in mitochondria. The sequence is that of Cytochrome c-type biogenesis protein CcmE homolog, mitochondrial from Arabidopsis thaliana (Mouse-ear cress).